The chain runs to 94 residues: Cell division topological specificity factor (94 aa).

Belongs to the MinE family.

In terms of biological role, prevents the cell division inhibition by proteins MinC and MinD at internal division sites while permitting inhibition at polar sites. This ensures cell division at the proper site by restricting the formation of a division septum at the midpoint of the long axis of the cell. The chain is Cell division topological specificity factor from Alkalilimnicola ehrlichii (strain ATCC BAA-1101 / DSM 17681 / MLHE-1).